A 278-amino-acid chain; its full sequence is Myb/SANT-like DNA-binding domain-containing protein 1 (278 aa).

Residues 44-131 (RNWTDAEMRG…WPYYLAIDRI (88 aa)) form the Myb-like domain. A disordered region spans residues 139–167 (CEGKLPDGQQPGPSTSQTEASLSPSAKST). Over residues 149-166 (PGPSTSQTEASLSPSAKS) the composition is skewed to polar residues.

The protein is Myb/SANT-like DNA-binding domain-containing protein 1 (Msantd1) of Mus musculus (Mouse).